The following is an 824-amino-acid chain: Leucine--tRNA ligase (824 aa).

Residues 42 to 52 carry the 'HIGH' region motif; that stretch reads PYPSGKIHMGH. The 'KMSKS' region motif lies at 581-585; it reads KMSKS. Residue K584 coordinates ATP.

This sequence belongs to the class-I aminoacyl-tRNA synthetase family.

It localises to the cytoplasm. The catalysed reaction is tRNA(Leu) + L-leucine + ATP = L-leucyl-tRNA(Leu) + AMP + diphosphate. This chain is Leucine--tRNA ligase, found in Geobacter sp. (strain M21).